The following is a 488-amino-acid chain: Protein nucleotidyltransferase YdiU (488 aa).

The ATP site is built by glycine 91, glycine 93, arginine 94, lysine 114, aspartate 126, glycine 127, arginine 177, and arginine 184. Aspartate 253 serves as the catalytic Proton acceptor. Residues asparagine 254 and aspartate 263 each contribute to the Mg(2+) site. Aspartate 263 contacts ATP.

This sequence belongs to the SELO family. Requires Mg(2+) as cofactor. Mn(2+) is required as a cofactor.

It catalyses the reaction L-seryl-[protein] + ATP = 3-O-(5'-adenylyl)-L-seryl-[protein] + diphosphate. The catalysed reaction is L-threonyl-[protein] + ATP = 3-O-(5'-adenylyl)-L-threonyl-[protein] + diphosphate. It carries out the reaction L-tyrosyl-[protein] + ATP = O-(5'-adenylyl)-L-tyrosyl-[protein] + diphosphate. The enzyme catalyses L-histidyl-[protein] + UTP = N(tele)-(5'-uridylyl)-L-histidyl-[protein] + diphosphate. It catalyses the reaction L-seryl-[protein] + UTP = O-(5'-uridylyl)-L-seryl-[protein] + diphosphate. The catalysed reaction is L-tyrosyl-[protein] + UTP = O-(5'-uridylyl)-L-tyrosyl-[protein] + diphosphate. Its function is as follows. Nucleotidyltransferase involved in the post-translational modification of proteins. It can catalyze the addition of adenosine monophosphate (AMP) or uridine monophosphate (UMP) to a protein, resulting in modifications known as AMPylation and UMPylation. The sequence is that of Protein nucleotidyltransferase YdiU from Bacillus cereus (strain ATCC 10987 / NRS 248).